The following is a 265-amino-acid chain: MTSFNSGRPVHVVIPARYGSTRLPGKPLVDLAGEPMIARVHARVSRALPGADIVVAIDDARIAAALDARGIRFAMTGAHHASGTDRAAELARVSGWHDTDVVLNVQGDEPLVPEALLKAFADFCVAAPDLGIATVACPVGDAALLDEPGIVKLVVDRRGRALYFSRAAIPFCRDGRSAGADLGGHLRHIGLYGYSNAALQALAHTAPCELEQLEQLEQLRALWLGMPIDVMRWPDAPPAGVDTPDDVARVVSLLKRQTQDETEPY.

Belongs to the KdsB family.

Its subcellular location is the cytoplasm. The enzyme catalyses 3-deoxy-alpha-D-manno-oct-2-ulosonate + CTP = CMP-3-deoxy-beta-D-manno-octulosonate + diphosphate. It functions in the pathway nucleotide-sugar biosynthesis; CMP-3-deoxy-D-manno-octulosonate biosynthesis; CMP-3-deoxy-D-manno-octulosonate from 3-deoxy-D-manno-octulosonate and CTP: step 1/1. It participates in bacterial outer membrane biogenesis; lipopolysaccharide biosynthesis. Activates KDO (a required 8-carbon sugar) for incorporation into bacterial lipopolysaccharide in Gram-negative bacteria. The sequence is that of 3-deoxy-manno-octulosonate cytidylyltransferase 2 from Burkholderia lata (strain ATCC 17760 / DSM 23089 / LMG 22485 / NCIMB 9086 / R18194 / 383).